The chain runs to 470 residues: Glucose-1-phosphate adenylyltransferase (470 aa).

Residues G165, 182–183 (EK), and S200 contribute to the alpha-D-glucose 1-phosphate site.

It belongs to the bacterial/plant glucose-1-phosphate adenylyltransferase family. In terms of assembly, homotetramer.

It catalyses the reaction alpha-D-glucose 1-phosphate + ATP + H(+) = ADP-alpha-D-glucose + diphosphate. It functions in the pathway glycan biosynthesis; glycogen biosynthesis. In terms of biological role, involved in the biosynthesis of ADP-glucose, a building block required for the elongation reactions to produce glycogen. Catalyzes the reaction between ATP and alpha-D-glucose 1-phosphate (G1P) to produce pyrophosphate and ADP-Glc. The sequence is that of Glucose-1-phosphate adenylyltransferase from Paenarthrobacter aurescens (strain TC1).